The sequence spans 414 residues: Zinc metalloproteinase nas-26 (414 aa).

The signal sequence occupies residues 1–20 (MTSSLVLILAPLALVAIGEA). Residues 21-61 (AFGNSSKIFEIPGLEVMASDKYPHFTTIETVSRTKVHRHRR) constitute a propeptide that is removed on maturation. N-linked (GlcNAc...) asparagine glycosylation is present at Asn-24. A Peptidase M12A domain is found at 62–264 (EVIAGQIYDW…AKVINDIYCP (203 aa)). Intrachain disulfides connect Cys-103/Cys-263, Cys-126/Cys-146, Cys-267/Cys-286, Cys-289/Cys-300, Cys-308/Cys-331, and Cys-358/Cys-378. His-154 serves as a coordination point for Zn(2+). Glu-155 is a catalytic residue. Zn(2+)-binding residues include His-158 and His-164. Residues 251–307 (AFLDAKVINDIYCPNACQGRNHLNCLAGGYPDPNNCNVCRCPEGLGGPDCGRLQPSP) form the EGF-like domain. Positions 308–414 (CGGEIHASDQ…RFSLRFRRQA (107 aa)) constitute a CUB domain.

It depends on Zn(2+) as a cofactor.

It localises to the secreted. Functionally, metalloprotease. The polypeptide is Zinc metalloproteinase nas-26 (toh-1) (Caenorhabditis elegans).